The following is a 229-amino-acid chain: Ribose-5-phosphate isomerase A (229 aa).

Substrate-binding positions include Thr28 to Thr31, Asp85 to Asp88, and Lys98 to Gly101. The active-site Proton acceptor is Glu107. Lys125 provides a ligand contact to substrate.

This sequence belongs to the ribose 5-phosphate isomerase family. In terms of assembly, homotetramer.

The catalysed reaction is aldehydo-D-ribose 5-phosphate = D-ribulose 5-phosphate. The protein operates within carbohydrate degradation; pentose phosphate pathway; D-ribose 5-phosphate from D-ribulose 5-phosphate (non-oxidative stage): step 1/1. Inhibited by D-4-phosphoerythronic acid. In terms of biological role, involved in the first step of the non-oxidative branch of the pentose phosphate pathway. It catalyzes the reversible conversion of ribose-5-phosphate to ribulose 5-phosphate. The chain is Ribose-5-phosphate isomerase A from Pyrococcus horikoshii (strain ATCC 700860 / DSM 12428 / JCM 9974 / NBRC 100139 / OT-3).